We begin with the raw amino-acid sequence, 257 residues long: Homeobox protein EMX1 (257 aa).

A DNA-binding region (homeobox) is located at residues 159-218 (PKRIRTAFSPSQLLRLERAFEKNHYVVGAERKQLAGSLSLSETQVKVWFQNRRTKYKRQK). The tract at residues 216–257 (RQKLEEEGPESEQKKKGSHHINRWRIATKQANGEDIDVTSND) is disordered. Residues 217–230 (QKLEEEGPESEQKK) show a composition bias toward basic and acidic residues.

This sequence belongs to the EMX homeobox family. As to quaternary structure, interacts with WRD11 (via the N-terminal and the central portion of the protein); the interaction associates EMX1 with GLI3. Cerebral cortex. Expressed in the olfactory bulbs.

The protein resides in the nucleus. Transcription factor, which in cooperation with EMX2, acts to generate the boundary between the roof and archipallium in the developing brain. May function in combinations with OTX1/2 to specify cell fates in the developing central nervous system. The polypeptide is Homeobox protein EMX1 (Emx1) (Mus musculus (Mouse)).